The following is a 169-amino-acid chain: Protein FAM106A (169 aa).

The protein belongs to the FAM106 family.

In Homo sapiens (Human), this protein is Protein FAM106A (FAM106A).